The following is a 211-amino-acid chain: UPF0637 protein ABC2405 (211 aa).

It belongs to the UPF0637 family.

The sequence is that of UPF0637 protein ABC2405 from Shouchella clausii (strain KSM-K16) (Alkalihalobacillus clausii).